Consider the following 320-residue polypeptide: Ribosomal RNA small subunit methyltransferase H (320 aa).

S-adenosyl-L-methionine is bound by residues 36 to 38, D56, F82, D103, and Q110; that span reads GGH.

This sequence belongs to the methyltransferase superfamily. RsmH family.

It localises to the cytoplasm. The enzyme catalyses cytidine(1402) in 16S rRNA + S-adenosyl-L-methionine = N(4)-methylcytidine(1402) in 16S rRNA + S-adenosyl-L-homocysteine + H(+). Specifically methylates the N4 position of cytidine in position 1402 (C1402) of 16S rRNA. The chain is Ribosomal RNA small subunit methyltransferase H from Chromobacterium violaceum (strain ATCC 12472 / DSM 30191 / JCM 1249 / CCUG 213 / NBRC 12614 / NCIMB 9131 / NCTC 9757 / MK).